Consider the following 491-residue polypeptide: UDP-N-acetylmuramate--L-alanine ligase (491 aa).

Residue 126–132 coordinates ATP; that stretch reads GTHGKTT.

It belongs to the MurCDEF family.

The protein localises to the cytoplasm. It catalyses the reaction UDP-N-acetyl-alpha-D-muramate + L-alanine + ATP = UDP-N-acetyl-alpha-D-muramoyl-L-alanine + ADP + phosphate + H(+). Its pathway is cell wall biogenesis; peptidoglycan biosynthesis. Cell wall formation. In Escherichia coli O1:K1 / APEC, this protein is UDP-N-acetylmuramate--L-alanine ligase.